Reading from the N-terminus, the 207-residue chain is UPF0328 protein ECU02_1590/ECU04_0060/ECU08_2120 (207 aa).

Disordered regions lie at residues 1 to 154 and 180 to 207; these read MPRP…HSHT and GRLHGSPTKGAQTAQQAQPHPPKQLATL. 2 stretches are compositionally biased toward basic and acidic residues: residues 14-24 and 75-97; these read DHPDFRSESSA and HTEGCHTHEANPEPNTKHTETES. 2 stretches are compositionally biased toward polar residues: residues 98 to 121 and 133 to 149; these read PKPQTSTQHHTPITIPSSLLSQNT and SRPSTIPANTYQPQSPH.

Belongs to the UPF0328 family.

The sequence is that of UPF0328 protein ECU02_1590/ECU04_0060/ECU08_2120 from Encephalitozoon cuniculi (strain GB-M1) (Microsporidian parasite).